A 233-amino-acid polypeptide reads, in one-letter code: Pre-hexon-linking protein VIII (233 aa).

Threonine 64 carries the post-translational modification Phosphothreonine; by host. A propeptide spanning residues 112–163 (ARHVRFRDRPSPYSSGSIKRLIIRGRGIQLNDEVVSSSTGPRPDGVFQLGGA) is cleaved from the precursor. Serine 180 carries the post-translational modification Phosphoserine; by host.

It belongs to the adenoviridae hexon-linking protein family. Interacts with the peripentonal hexons as well as the hexons in the facets. Part of a complex composed of the core-capsid bridging protein, the endosome lysis protein VI and the hexon-linking protein VIII; these interactions bridge the virus core to the capsid. Cleaved by the viral protease during virion maturation. May cause the middle segment to be shed from the capsid.

It is found in the virion. The protein localises to the host nucleus. Functionally, structural component of the virion that acts as a cement protein on the capsid interior and which glue the peripentonal hexons and group-of-nine hexons together. This Homo sapiens (Human) protein is Pre-hexon-linking protein VIII.